The chain runs to 268 residues: MILVVDVGNTNIVLGLYEKQELVDFWRISTDEDKSSDEYSVLINQLFQYSGLNIKTVEDVIISSVVPNIMYSLEHAIRKLCNVEPLVVGPGVKTGINIKYDNPKQVGADRIVNAVAAFEKYGGPLIVVDFGTATTFCAISGHGEYLGGTISPGIKIASDALFQRAAKLPRVELVKPGKVICKSTVSSMQAGIVYGYVGLVEYIVNKMKKEFNVRSKIKVVATGGLSTLIDSETQCIDVVDKFLTLEGLSLIYERNRQERQAILKESQA.

6-13 (DVGNTNIV) contributes to the ATP binding site. Residues tyrosine 100 and 107–110 (GADR) contribute to the substrate site. The active-site Proton acceptor is the aspartate 109. Aspartate 129 contacts K(+). Threonine 132 contacts ATP. Threonine 184 is a substrate binding site.

Belongs to the type III pantothenate kinase family. In terms of assembly, homodimer. NH4(+) serves as cofactor. It depends on K(+) as a cofactor.

It localises to the cytoplasm. The catalysed reaction is (R)-pantothenate + ATP = (R)-4'-phosphopantothenate + ADP + H(+). The protein operates within cofactor biosynthesis; coenzyme A biosynthesis; CoA from (R)-pantothenate: step 1/5. Catalyzes the phosphorylation of pantothenate (Pan), the first step in CoA biosynthesis. In Alkaliphilus metalliredigens (strain QYMF), this protein is Type III pantothenate kinase.